Reading from the N-terminus, the 131-residue chain is Small ribosomal subunit protein uS11 (131 aa).

It belongs to the universal ribosomal protein uS11 family. In terms of assembly, part of the 30S ribosomal subunit. Interacts with proteins S7 and S18. Binds to IF-3.

Functionally, located on the platform of the 30S subunit, it bridges several disparate RNA helices of the 16S rRNA. Forms part of the Shine-Dalgarno cleft in the 70S ribosome. The sequence is that of Small ribosomal subunit protein uS11 from Natranaerobius thermophilus (strain ATCC BAA-1301 / DSM 18059 / JW/NM-WN-LF).